Consider the following 344-residue polypeptide: Methionine import ATP-binding protein MetN (344 aa).

In terms of domain architecture, ABC transporter spans 2–241 (IEINQVNKVF…PKTELAHDFI (240 aa)). Position 38-45 (38-45 (GSSGAGKS)) interacts with ATP.

The protein belongs to the ABC transporter superfamily. Methionine importer (TC 3.A.1.24) family. The complex is composed of two ATP-binding proteins (MetN), two transmembrane proteins (MetI) and a solute-binding protein (MetQ).

It is found in the cell inner membrane. The enzyme catalyses L-methionine(out) + ATP + H2O = L-methionine(in) + ADP + phosphate + H(+). The catalysed reaction is D-methionine(out) + ATP + H2O = D-methionine(in) + ADP + phosphate + H(+). Its function is as follows. Part of the ABC transporter complex MetNIQ involved in methionine import. Responsible for energy coupling to the transport system. This Vibrio vulnificus (strain YJ016) protein is Methionine import ATP-binding protein MetN.